A 139-amino-acid chain; its full sequence is Plastocyanin (139 aa).

Residues 1–34 form the signal peptide; that stretch reads MKLIAQISRSLSLALFALVLMVGSFVAVMSPAAA. The 105-residue stretch at 35–139 folds into the Plastocyanin-like domain; sequence ETFTVKMGAD…GMVGKITVEG (105 aa). Cu cation contacts are provided by histidine 73, cysteine 123, histidine 126, and methionine 131.

The protein belongs to the plastocyanin family. Cu(2+) is required as a cofactor.

Its subcellular location is the cellular thylakoid membrane. Functionally, participates in electron transfer between P700 and the cytochrome b6-f complex in photosystem I. The polypeptide is Plastocyanin (petE) (Leptolyngbya laminosa (Phormidium laminosum)).